The chain runs to 300 residues: Protoheme IX farnesyltransferase (300 aa).

Transmembrane regions (helical) follow at residues 24-44 (GLAI…IHEF), 46-66 (LETI…VGAS), 99-119 (AFTI…MINP), 122-142 (AMFG…LKTV), 145-165 (LSVF…WVAA), 176-196 (LFLI…WFLF), 220-240 (IVLY…GYTG), 244-264 (LTPV…VYAI), and 275-295 (AKTL…VYIL).

This sequence belongs to the UbiA prenyltransferase family. Protoheme IX farnesyltransferase subfamily.

The protein localises to the cell inner membrane. The catalysed reaction is heme b + (2E,6E)-farnesyl diphosphate + H2O = Fe(II)-heme o + diphosphate. It functions in the pathway porphyrin-containing compound metabolism; heme O biosynthesis; heme O from protoheme: step 1/1. Converts heme B (protoheme IX) to heme O by substitution of the vinyl group on carbon 2 of heme B porphyrin ring with a hydroxyethyl farnesyl side group. The protein is Protoheme IX farnesyltransferase of Flavobacterium psychrophilum (strain ATCC 49511 / DSM 21280 / CIP 103535 / JIP02/86).